The sequence spans 679 residues: WD repeat-containing protein 48 homolog (679 aa).

WD repeat units follow at residues 26–65 (QHRN…NEKY), 71–110 (HHND…CMST), 113–152 (THRD…ALTA), 164–203 (GSKD…RSMK), 206–245 (GHTE…CIQT), 248–287 (VHKE…NKML), 290–329 (EEKA…RCVL), and 349–388 (KGGA…KKEE). The segment at 594–615 (PSAGNANNSLQNSQSDANSEGS) is disordered.

Belongs to the WD repeat WDR48 family. As to quaternary structure, catalytic component of the Usp12-46 deubiquitylase complex consisting of Usp12-46, Wdr20 and Uaf1; regulatory subunit that, together wtih Wdr20, stabilizes Usp12-46. The Usp12-46 deubiquitylase complex associates with arr/arrow; the interaction leads to deubiquitination and stabilization of arr/arrow.

Its function is as follows. Regulatory component of the Usp12-46 deubiquitylase complex. activates deubiquitination by increasing the catalytic turnover without increasing the affinity of deubiquitinating enzymes for the substrate. The complex deubiquitylates the wg/wingless-signaling receptor arr/arrow, which stabilizes the receptor and increases its concentration at the cell surface; this enhances the sensitivity of cells to wg/wingless-signal stimulation. This increases the amplitude and spatial range of the signaling response to the wg/wingless morphogen gradient, facilitating the precise concentration-dependent regulation of its target genes. Together with Wdr20 and Usp12-46 required for wg/wingless-mediated signaling in the wing imaginal disc and for wg/wingless-dependent regulation of intestinal stem cell proliferation. This is WD repeat-containing protein 48 homolog from Drosophila mojavensis (Fruit fly).